The following is a 910-amino-acid chain: MDRKVAREFRHKVDFLIENDAEKDYLYDVLRMYHQTMDVAVLVGDLKLVINEPNRLPLFDAIRPLIPLKHQVEYDQLTPRRSRKLKEVRLDRLHPEGLGLSVRGGLEFGCGLFISHLIKGGQADSVGLQVGDEIVRINGYSISSCTHEEVINLIRTKKTVSIKVRHIGLIPVKSSPEESLKWQYVDQFVSESGGVRGGLGSPGNRTTKEKKVFISLVGSRGLGCSISSGPIQKPGIFVSHVKPGSLSAEVGLETGDQIVEVNGIDFTNLDHKEAVNVLKSSRSLTISIVAGAGRELFMTDRERLEEARQRELQRQELLMQKRLAMESNKILQEQQEMERQRRKEIAQKAAEENERYRKEMEQISEEEEKFKKQWEEDWGSKEQLILPKTITAEVHPVPLRKPKSFGWFYRYDGKFPTIRKKAKEKKKAKYDSLQDLRKNKKELEFEQKLYKEKEEMLEKEKQLKINRLAQEVSETEREDLEESEKTQYWVERLCQTRLEQISSAENEIPEMTTGPPPPPPSVSPLAPPLRRFAGGIHLHTTDLDDIPLDMFYYPPKTPSALPVMPHPPSVNSPSKVPAPPVLPSSGHVSSSSSPWVQRTPPPIPIPPPPSIPTQDLTPTRPLPSALEEALGNHPFRTGDPGHPADDWEANTHSGKPSSSPTTERSFPPAPKTFCPSPQPPRGPGVSTISKPVMVHQEHNFVYRPAVKSEVLPQEMLKRMVVYQTAFRQDFRKYEEGFDPYSMFSPEQIAGKDVRLLRIKKEGSLDLALEGGVDSPVGKVVVSAVYEGGAAERHGGVVKGDEIMAINGKIVTDYTLAEAEAALQKAWNQGGDWIDLVVAVCPPKEYDDELSSLPSSAAESPQLARKQLEAYEPVCRHGFFLQLEPTNLLLKSRERNQTDPSWRPASSAPSP.

The tract at residues 1–86 (MDRKVAREFR…LTPRRSRKLK (86 aa)) is N-terminal domain. PDZ domains lie at 87–171 (EVRL…GLIP) and 211–295 (KVFI…AGRE). Residues 194–833 (GVRGGLGSPG…KAWNQGGDWI (640 aa)) are mediates interaction with MYO7B. At Ser-219 the chain carries Phosphoserine. Coiled coils occupy residues 299–377 (TDRE…WEED) and 417–482 (TIRK…DLEE). The tract at residues 563-688 (VMPHPPSVNS…PPRGPGVSTI (126 aa)) is disordered. Residues 564–582 (MPHPPSVNSPSKVPAPPVL) are compositionally biased toward pro residues. A compositionally biased stretch (low complexity) spans 583-596 (PSSGHVSSSSSPWV). Over residues 599-611 (TPPPIPIPPPPSI) the composition is skewed to pro residues. Polar residues predominate over residues 650 to 664 (NTHSGKPSSSPTTER). The PDZ 3 domain occupies 752-839 (DVRLLRIKKE…GDWIDLVVAV (88 aa)). The segment at 890 to 910 (KSRERNQTDPSWRPASSAPSP) is disordered. Low complexity predominate over residues 899-910 (PSWRPASSAPSP).

In terms of assembly, part of the IMAC/intermicrovillar adhesion complex/intermicrovillar tip-link complex composed of ANKS4B, MYO7B, USH1C, CDHR2 and CDHR5. Part of a complex composed of USH1C, USH1G and MYO7A. Interacts with F-actin. Interacts with USH2A. Interacts with SLC4A7. Interacts (via PDZ1 domain) with the C-terminus of USHBP1. Interacts (via N-terminus and PDZ 2 domain) with CDH23. Interacts with USH1G. Interacts with MYO7B. Interacts with CDHR2 and CDHR5; may mediate their interaction with MYO7B at the microvilli tip. Interacts (via PDZ 1 domain) with ANKS4B. Interacts (via PDZ 1 domain) with DOCK4. In terms of tissue distribution, detected in stereocilia of cochlear hair cells (at protein level). Isoform 1 is expressed in the eye, cochlea, vestibule, heart, kidney, small intestine and testis; it is barely visible in skeletal muscle, liver, and lung and is absent from the brain. Isoforms 2 and 3 are expressed in the cochlea and vestibule.

The protein localises to the cytoplasm. The protein resides in the cytosol. It localises to the cytoskeleton. Its subcellular location is the cell projection. It is found in the microvillus. Its function is as follows. Anchoring/scaffolding protein that is a part of the functional network formed by USH1C, USH1G, CDH23 and MYO7A that mediates mechanotransduction in cochlear hair cells. Required for normal development and maintenance of cochlear hair cell bundles. As part of the intermicrovillar adhesion complex/IMAC plays a role in brush border differentiation, controlling microvilli organization and length. Probably plays a central regulatory role in the assembly of the complex, recruiting CDHR2, CDHR5 and MYO7B to the microvilli tips. This is Harmonin (Ush1c) from Mus musculus (Mouse).